A 30-amino-acid polypeptide reads, in one-letter code: Dermaseptin-3.4TR (30 aa).

In terms of tissue distribution, expressed by the skin glands.

It localises to the secreted. Its function is as follows. Has antimicrobial activity. The chain is Dermaseptin-3.4TR from Phyllomedusa trinitatis (Trinidad leaf frog).